The following is a 559-amino-acid chain: Suppressor of tumorigenicity 7 protein-like (559 aa).

3 helical membrane-spanning segments follow: residues 39–59, 83–103, and 513–533; these read GLAN…LYAL, FYVA…IFEW, and LPFF…IALL.

It belongs to the ST7 family.

Its subcellular location is the membrane. In Rattus norvegicus (Rat), this protein is Suppressor of tumorigenicity 7 protein-like (St7l).